A 190-amino-acid chain; its full sequence is UPF0301 protein Pfl01_5311 (190 aa).

This sequence belongs to the UPF0301 (AlgH) family.

This is UPF0301 protein Pfl01_5311 from Pseudomonas fluorescens (strain Pf0-1).